The chain runs to 181 residues: Ribulose bisphosphate carboxylase small subunit 2B, chloroplastic (181 aa).

A chloroplast-targeting transit peptide spans 1-54 (MASSMFSSTAVVTSPAQATMVAPFTGLKSSASFPVTRKANNDITSITSNGGRVS).

Belongs to the RuBisCO small chain family. As to quaternary structure, heterohexadecamer of 8 large and 8 small subunits.

It localises to the plastid. The protein localises to the chloroplast. In terms of biological role, ruBisCO catalyzes two reactions: the carboxylation of D-ribulose 1,5-bisphosphate, the primary event in carbon dioxide fixation, as well as the oxidative fragmentation of the pentose substrate. Both reactions occur simultaneously and in competition at the same active site. Although the small subunit is not catalytic it is essential for maximal activity. The polypeptide is Ribulose bisphosphate carboxylase small subunit 2B, chloroplastic (RBCS-2B) (Arabidopsis thaliana (Mouse-ear cress)).